A 343-amino-acid chain; its full sequence is Holliday junction branch migration complex subunit RuvB (343 aa).

The large ATPase domain (RuvB-L) stretch occupies residues 1 to 185 (MMNENLDATG…FGISSRLQYY (185 aa)). ATP is bound by residues leucine 24, arginine 25, glycine 66, lysine 69, threonine 70, threonine 71, 132 to 134 (EDY), arginine 175, tyrosine 185, and arginine 222. Residue threonine 70 coordinates Mg(2+). The tract at residues 186 to 256 (STELLSGIVE…IAKFGLKALN (71 aa)) is small ATPAse domain (RuvB-S). A head domain (RuvB-H) region spans residues 259 to 343 (AHGLDEMDNK…GSNQGGLFDN (85 aa)). The DNA site is built by arginine 314 and arginine 319.

This sequence belongs to the RuvB family. As to quaternary structure, homohexamer. Forms an RuvA(8)-RuvB(12)-Holliday junction (HJ) complex. HJ DNA is sandwiched between 2 RuvA tetramers; dsDNA enters through RuvA and exits via RuvB. An RuvB hexamer assembles on each DNA strand where it exits the tetramer. Each RuvB hexamer is contacted by two RuvA subunits (via domain III) on 2 adjacent RuvB subunits; this complex drives branch migration. In the full resolvosome a probable DNA-RuvA(4)-RuvB(12)-RuvC(2) complex forms which resolves the HJ.

It is found in the cytoplasm. It carries out the reaction ATP + H2O = ADP + phosphate + H(+). The RuvA-RuvB-RuvC complex processes Holliday junction (HJ) DNA during genetic recombination and DNA repair, while the RuvA-RuvB complex plays an important role in the rescue of blocked DNA replication forks via replication fork reversal (RFR). RuvA specifically binds to HJ cruciform DNA, conferring on it an open structure. The RuvB hexamer acts as an ATP-dependent pump, pulling dsDNA into and through the RuvAB complex. RuvB forms 2 homohexamers on either side of HJ DNA bound by 1 or 2 RuvA tetramers; 4 subunits per hexamer contact DNA at a time. Coordinated motions by a converter formed by DNA-disengaged RuvB subunits stimulates ATP hydrolysis and nucleotide exchange. Immobilization of the converter enables RuvB to convert the ATP-contained energy into a lever motion, pulling 2 nucleotides of DNA out of the RuvA tetramer per ATP hydrolyzed, thus driving DNA branch migration. The RuvB motors rotate together with the DNA substrate, which together with the progressing nucleotide cycle form the mechanistic basis for DNA recombination by continuous HJ branch migration. Branch migration allows RuvC to scan DNA until it finds its consensus sequence, where it cleaves and resolves cruciform DNA. The chain is Holliday junction branch migration complex subunit RuvB from Christiangramia forsetii (strain DSM 17595 / CGMCC 1.15422 / KT0803) (Gramella forsetii).